Consider the following 386-residue polypeptide: Histidine decarboxylase (386 aa).

Residue histidine 120 participates in substrate binding. Lysine 233 carries the N6-(pyridoxal phosphate)lysine modification.

Belongs to the group II decarboxylase family. As to quaternary structure, homotetramer. Pyridoxal 5'-phosphate is required as a cofactor.

It carries out the reaction L-histidine + H(+) = histamine + CO2. The protein operates within siderophore biosynthesis; anguibactin biosynthesis. The chain is Histidine decarboxylase from Vibrio anguillarum (strain ATCC 68554 / 775) (Listonella anguillarum).